We begin with the raw amino-acid sequence, 29 residues long: Lambda-theraphotoxin-Ec2c (29 aa).

3 cysteine pairs are disulfide-bonded: Cys-2-Cys-16, Cys-9-Cys-21, and Cys-15-Cys-25.

Belongs to the neurotoxin 30 (phrixotoxin) family. In terms of tissue distribution, expressed by the venom gland.

It is found in the secreted. In terms of biological role, both insecticidal and vertebrate neurotoxin that potently blocks insect calcium-activated potassium (BKCa) channels (Slo-type) in cockroach dorsal unpaired median (DUM) neurons (IC(50)=24.6 nM). This occurs in the absence of any shifts in the voltage dependence of activation. May interact with the turret and/or loop region of the external entrance to the channel and does not project deeply into the pore of the channel. Also shows toxicity to mice by introcerebroventicular injection. The protein is Lambda-theraphotoxin-Ec2c of Eucratoscelus constrictus (African red-rump baboon spider).